The primary structure comprises 390 residues: S-adenosylmethionine synthase 3 (390 aa).

Residue E9 participates in Mg(2+) binding. H15 lines the ATP pocket. E43 is a K(+) binding site. L-methionine-binding residues include E56 and Q99. Residues 167-169 (DGK), 235-238 (SGRF), D246, 252-253 (RK), A269, K273, and K277 each bind ATP. Residue D246 coordinates L-methionine. K277 contacts L-methionine.

This sequence belongs to the AdoMet synthase family. As to quaternary structure, homotetramer. Requires Mn(2+) as cofactor. Mg(2+) serves as cofactor. It depends on Co(2+) as a cofactor. K(+) is required as a cofactor. The cofactor is NH4(+). As to expression, mostly expressed in roots, and, to a lower extent, in hypocotyls and cotyledons.

It is found in the cytoplasm. The enzyme catalyses L-methionine + ATP + H2O = S-adenosyl-L-methionine + phosphate + diphosphate. The protein operates within amino-acid biosynthesis; S-adenosyl-L-methionine biosynthesis; S-adenosyl-L-methionine from L-methionine: step 1/1. Its activity is regulated as follows. Inhibited by products of SAMS reaction (SAM, Pi, PPi), substrate analogs (cycloleucine and ethionine), and alternative nucleotides (GTP, CTP and ADP). Strongly repressed by PPPi. In terms of biological role, catalyzes the formation of S-adenosylmethionine from methionine and ATP. The reaction comprises two steps that are both catalyzed by the same enzyme: formation of S-adenosylmethionine (AdoMet) and triphosphate, and subsequent hydrolysis of the triphosphate. This is S-adenosylmethionine synthase 3 (SAMS3) from Catharanthus roseus (Madagascar periwinkle).